The primary structure comprises 103 residues: Methanol dehydrogenase [cytochrome c] subunit 2 (103 aa).

A signal peptide spans methionine 1–alanine 20. Cysteine 26 and cysteine 32 are oxidised to a cystine.

This sequence belongs to the methanol dehydrogenase subunit 2 family. As to quaternary structure, heterotetramer composed of 2 alpha and 2 beta subunits.

It is found in the periplasm. The enzyme catalyses 2 Fe(III)-[cytochrome cL] + a primary alcohol = 2 Fe(II)-[cytochrome cL] + an aldehyde + 2 H(+). Functionally, catalyzes the oxidation of primary alcohols including methanol. This is Methanol dehydrogenase [cytochrome c] subunit 2 (moxI) from Paracoccus denitrificans.